We begin with the raw amino-acid sequence, 968 residues long: Breast cancer anti-estrogen resistance protein 1 (968 aa).

M1 carries the N-acetylmethionine modification. Positions 97 to 159 constitute an SH3 domain; the sequence is DKNVLAKALY…PGNRLKILVG (63 aa). A disordered region spans residues 164–277; sequence KPAAPGPGPP…GPGSPAQDIY (114 aa). Residues 167–182 are compositionally biased toward pro residues; sequence APGPGPPATPPQPQPS. The tract at residues 213–514 is substrate for kinases; it reads YLVPTPSKTQ…DGVYAVPPPA (302 aa). Y226 is modified (phosphotyrosine; by SRC). Polar residues predominate over residues 233–249; the sequence is PQFQSPPAKQTSTFSKQ. The residue at position 237 (S237) is a Phosphoserine. Y332 carries the post-translational modification Phosphotyrosine. Y347 is modified (phosphotyrosine; by ABL1). A Phosphothreonine modification is found at T367. S390 bears the Phosphoserine mark. Residues 393–416 form a disordered region; that stretch reads KGLPPSNHHSVYDVPPSVSKDVPD. Phosphotyrosine occurs at positions 460, 470, and 508. Disordered regions lie at residues 503–544 and 705–756; these read IDDG…SLEV and RTKA…NSEG. Over residues 514–524 the composition is skewed to basic and acidic residues; the sequence is AEREAPTDGKR. Residues 525-542 are compositionally biased toward low complexity; the sequence is LSASSTGSTRSSQSASSL. 3 positions are modified to phosphoserine: S526, S535, and S737. Positions 715 to 753 are enriched in polar residues; the sequence is GSSSLHLNPTDKASSIQSRPLPSPPKFTSQDSPDGQYEN. The short motif at 733–741 is the SH3-binding element; that stretch reads RPLPSPPKF. The segment at 844–894 is divergent helix-loop-helix motif; it reads FYLEQCEANLTTLTDAVDAFFTAVATNQPPKIFVAHSKFVILSAHKLVFIG.

Belongs to the CAS family. As to quaternary structure, forms complexes in vivo with PTK2/FAK1, adapter protein CRKL and LYN kinase. Can heterodimerize with NEDD9. Component of a complex comprised of SH2D3C, BCAR1/CAS, and CRK. Within the complex, interacts with SH2D3C (via C-terminus), and CRK. Part of a complex comprised of PTPRA, BCAR1, BCAR3 (via SH2 domain) and SRC; the formation of the complex is dependent on integrin mediated-tyrosine phosphorylation of PTPRA. Interacts with BCAR3 (via Ras-GEF domain); the interaction regulates adhesion-dependent serine phosphorylation. Interacts with SMAD2 and SMAD3. Interacts with NPHP1. Interacts with PTK2B/PYK2. Interacts (via C-terminus) with SH2D3C/CHAT isoform 2 (via C-terminus). Interacts with activated CSPG4. Interacts with BMX, INPPL1/SHIP2 and PEAK1. Part of a collagen stimulated complex involved in cell migration composed of CDC42, CRK, TNK2 and BCAR1/p130cas. Interacts with TNK2 via SH3 domains. Interacts with PTK2B/PYK2. Interacts (when tyrosine-phosphorylated) with tensin TNS1; the interaction is increased by phosphorylation of TNS1. PTK2/FAK1 activation mediates phosphorylation at the YDYVHL motif; phosphorylation is most likely catalyzed by SRC family members. SRC-family kinases are recruited to the phosphorylated sites and can phosphorylate other tyrosine residues. Tyrosine phosphorylation is triggered by integrin mediated adhesion of cells to the extracellular matrix. Post-translationally, phosphorylated by SRC kinase in a EDN1- and PTK2B-mediated manner; phosphorylation strengthens its interaction with BCAR3 as part of the PTK2B/BCAR1/BCAR3/RAP1 signaling pathway. In terms of processing, dephosphorylated by PTPN14 at Tyr-226. In terms of tissue distribution, widely expressed. Higher expression in lung, intestine and testis.

The protein localises to the cell junction. The protein resides in the focal adhesion. It localises to the cytoplasm. Its subcellular location is the cell projection. It is found in the axon. Functionally, docking protein which plays a central coordinating role for tyrosine-kinase-based signaling related to cell adhesion. Implicated in induction of cell migration and cell branching. Involved in the BCAR3-mediated inhibition of TGFB signaling. This Rattus norvegicus (Rat) protein is Breast cancer anti-estrogen resistance protein 1 (Bcar1).